The sequence spans 506 residues: 2,3-bisphosphoglycerate-independent phosphoglycerate mutase (506 aa).

The Mn(2+) site is built by Asp-13 and Ser-63. The active-site Phosphoserine intermediate is the Ser-63. Substrate is bound by residues His-124, Arg-153–Asp-154, Arg-183, Arg-189, Arg-255–Arg-258, and Lys-331. Residues Asp-397, His-401, Asp-438, His-439, and His-457 each contribute to the Mn(2+) site.

Belongs to the BPG-independent phosphoglycerate mutase family. In terms of assembly, monomer. Mn(2+) is required as a cofactor.

It carries out the reaction (2R)-2-phosphoglycerate = (2R)-3-phosphoglycerate. It functions in the pathway carbohydrate degradation; glycolysis; pyruvate from D-glyceraldehyde 3-phosphate: step 3/5. In terms of biological role, catalyzes the interconversion of 2-phosphoglycerate and 3-phosphoglycerate. This chain is 2,3-bisphosphoglycerate-independent phosphoglycerate mutase, found in Ruegeria sp. (strain TM1040) (Silicibacter sp.).